A 130-amino-acid chain; its full sequence is Flagellar assembly factor FliW (130 aa).

Belongs to the FliW family. In terms of assembly, interacts with translational regulator CsrA and flagellin(s).

It is found in the cytoplasm. Its function is as follows. Acts as an anti-CsrA protein, binds CsrA and prevents it from repressing translation of its target genes, one of which is flagellin. Binds to flagellin and participates in the assembly of the flagellum. This chain is Flagellar assembly factor FliW, found in Borrelia duttonii (strain Ly).